We begin with the raw amino-acid sequence, 811 residues long: Potassium transporter 27 (811 aa).

Residues 1–64 lie on the Cytoplasmic side of the membrane; sequence MGDDVLGRGS…QEESWARTLK (64 aa). The chain crosses the membrane as a helical span at residues 65–85; it reads LAFQCVGILYGDIGTSPLFVY. The Extracellular portion of the chain corresponds to 86 to 102; that stretch reads SSTFKDGVRHPDDLLGA. Residues 103 to 123 traverse the membrane as a helical segment; sequence LSLIIYSFALFTIVKYVFIAL. Topologically, residues 124-188 are cytoplasmic; it reads RANDDGDGGT…ELLETNRAVK (65 aa). A helical membrane pass occupies residues 189–209; that stretch reads IWLFLLTILATAMVISDAVLT. At 210 to 226 the chain is on the extracellular side; it reads PAISVLSAVGGLKEKAP. The chain crosses the membrane as a helical span at residues 227–247; it reads NLTTDEIVWITVATLVVLFAI. The Cytoplasmic segment spans residues 248 to 254; the sequence is QRFGTDK. A helical membrane pass occupies residues 255–275; that stretch reads IGYLFAPIILLWLLLIGCVGI. Residues 276 to 310 are Extracellular-facing; it reads YNTIKFDTGVLRAFNLKYIIDYFRRNKKDGWISLS. Residues 311-331 traverse the membrane as a helical segment; sequence GILLCFTGTEALFSDLGYFSI. Topologically, residues 332–335 are cytoplasmic; sequence RSIQ. A helical membrane pass occupies residues 336–356; the sequence is LSFSFGLVPSVLLAYIGQAAY. Topologically, residues 357–375 are extracellular; that stretch reads LREHPEHIANTFYRSTPNV. The chain crosses the membrane as a helical span at residues 376–396; sequence MFWPTFILAVAASIIGSQAMI. Residues 397-434 are Cytoplasmic-facing; the sequence is SCAFATISHLQTLNCFPRVKILHTSRQYSGQLYIPEVN. A helical membrane pass occupies residues 435-455; the sequence is FLLCVGACLVTIGFKTTVIIG. Residues 456–459 are Extracellular-facing; that stretch reads EAHA. A helical transmembrane segment spans residues 460 to 480; that stretch reads ICVVFVMIITTLLLTIVMLLV. The Cytoplasmic portion of the chain corresponds to 481 to 482; sequence WK. A helical membrane pass occupies residues 483-503; the sequence is VSIWYVALFFIVFMSSESIYL. Residues 504–515 lie on the Extracellular side of the membrane; it reads SAVLYQFVHGEY. A helical membrane pass occupies residues 516-536; that stretch reads VPVAMSVFLMIVMTVWHYVHV. The Cytoplasmic segment spans residues 537–811; the sequence is KRYEFELEHT…VLKVGIAYEI (275 aa).

Belongs to the HAK/KUP transporter (TC 2.A.72.3) family.

It localises to the membrane. Functionally, high-affinity potassium transporter. The protein is Potassium transporter 27 (HAK27) of Oryza sativa subsp. japonica (Rice).